The sequence spans 296 residues: 6-hydroxypseudooxynicotine dehydrogenase complex subunit alpha (296 aa).

The FAD-binding PCMH-type domain occupies 1–177 (MKPPSFDYVV…VEVNVPQLPH (177 aa)). Residues 30 to 37 (IIAGGQSL), 111 to 115 (TIGGS), and Glu-124 contribute to the FAD site.

In terms of assembly, heterohexamer of 2 alpha (kdhA), 2 beta (kdhB) and 2 gamma (kdhC) subunit. Dimer of heterotrimers. FAD is required as a cofactor.

The enzyme catalyses 6-hydroxypseudooxynicotine + A + H2O = 2,6-dihydroxypseudooxynicotine + AH2. Its pathway is alkaloid degradation; nicotine degradation. Molybdo-flavoprotein enzyme complex involved in nicotine degradation. The subunit gamma (large subunit) contains the substrate-binding sites, the subunit alpha (medium subunit) binds FAD and the subunit beta (small subunit) has a 2Fe-2S ferredoxin-type domain which binds 2 2Fe-2S clusters. In Paenarthrobacter nicotinovorans (Arthrobacter nicotinovorans), this protein is 6-hydroxypseudooxynicotine dehydrogenase complex subunit alpha (kdhA).